The primary structure comprises 433 residues: Zinc carboxypeptidase A 1 (433 aa).

A signal peptide spans 1–28 (MVRLNSAAGSRWWAPAMAILAVALSVEA). The Peptidase M14 domain maps to 130-423 (DYHTLEEIHA…DSLITLLEES (294 aa)). Zn(2+) is bound by residues H187 and E190. The cysteines at positions 253 and 276 are disulfide-linked. H312 provides a ligand contact to Zn(2+). The Proton donor/acceptor role is filled by E387.

It belongs to the peptidase M14 family. It depends on Zn(2+) as a cofactor. In terms of tissue distribution, expressed in the posterior midgut in pupae and female adults.

The protein resides in the secreted. In terms of biological role, involved in the digestion of the blood meal. The protein is Zinc carboxypeptidase A 1 of Anopheles gambiae (African malaria mosquito).